Reading from the N-terminus, the 96-residue chain is Small ribosomal subunit protein bS6 (96 aa).

Belongs to the bacterial ribosomal protein bS6 family.

Binds together with bS18 to 16S ribosomal RNA. The protein is Small ribosomal subunit protein bS6 of Heliobacterium modesticaldum (strain ATCC 51547 / Ice1).